The primary structure comprises 142 residues: Hemoglobin subunit alpha-2 (142 aa).

In terms of domain architecture, Globin spans 2–142 (VLSAADKSNI…VSTVLTSKYR (141 aa)). H59 serves as a coordination point for O2. H88 is a binding site for heme b.

The protein belongs to the globin family. Heterotetramer of two alpha chains and two beta chains. Red blood cells.

Involved in oxygen transport from the lung to the various peripheral tissues. The protein is Hemoglobin subunit alpha-2 of Bubalus bubalis (Domestic water buffalo).